The chain runs to 155 residues: SsrA-binding protein (155 aa).

A compositionally biased stretch (basic and acidic residues) spans 135-147 (TIKRRDQERDIKK). Residues 135–155 (TIKRRDQERDIKKQMKHYNAR) are disordered.

This sequence belongs to the SmpB family.

Its subcellular location is the cytoplasm. Functionally, required for rescue of stalled ribosomes mediated by trans-translation. Binds to transfer-messenger RNA (tmRNA), required for stable association of tmRNA with ribosomes. tmRNA and SmpB together mimic tRNA shape, replacing the anticodon stem-loop with SmpB. tmRNA is encoded by the ssrA gene; the 2 termini fold to resemble tRNA(Ala) and it encodes a 'tag peptide', a short internal open reading frame. During trans-translation Ala-aminoacylated tmRNA acts like a tRNA, entering the A-site of stalled ribosomes, displacing the stalled mRNA. The ribosome then switches to translate the ORF on the tmRNA; the nascent peptide is terminated with the 'tag peptide' encoded by the tmRNA and targeted for degradation. The ribosome is freed to recommence translation, which seems to be the essential function of trans-translation. The polypeptide is SsrA-binding protein (Streptococcus pyogenes serotype M3 (strain SSI-1)).